Here is a 544-residue protein sequence, read N- to C-terminus: Chaperonin GroEL (544 aa).

ATP contacts are provided by residues 29-32 (TMGP), K50, 86-90 (DGTTT), G414, 477-479 (NAV), and D493.

Belongs to the chaperonin (HSP60) family. As to quaternary structure, forms a cylinder of 14 subunits composed of two heptameric rings stacked back-to-back. Interacts with the co-chaperonin GroES.

The protein resides in the cytoplasm. The catalysed reaction is ATP + H2O + a folded polypeptide = ADP + phosphate + an unfolded polypeptide.. Together with its co-chaperonin GroES, plays an essential role in assisting protein folding. The GroEL-GroES system forms a nano-cage that allows encapsulation of the non-native substrate proteins and provides a physical environment optimized to promote and accelerate protein folding. The chain is Chaperonin GroEL from Campylobacter curvus (strain 525.92).